Reading from the N-terminus, the 131-residue chain is D-ribose pyranase (131 aa).

Histidine 20 acts as the Proton donor in catalysis. Substrate is bound by residues aspartate 28, histidine 98, and 120-122 (YAN).

This sequence belongs to the RbsD / FucU family. RbsD subfamily. In terms of assembly, homodecamer.

The protein localises to the cytoplasm. It catalyses the reaction beta-D-ribopyranose = beta-D-ribofuranose. Its pathway is carbohydrate metabolism; D-ribose degradation; D-ribose 5-phosphate from beta-D-ribopyranose: step 1/2. Catalyzes the interconversion of beta-pyran and beta-furan forms of D-ribose. In Bacillus cereus (strain B4264), this protein is D-ribose pyranase.